The sequence spans 356 residues: Replication factor C subunit 3 (356 aa).

Position 20 is an N6-acetyllysine (Lys-20). Ser-125 is subject to Phosphoserine.

Belongs to the activator 1 small subunits family. Subunit of the RFC complex, an heteropentameric complex consisting of a large subunit RFC1 and four small subunits RFC2, RFC3, RFC4 and RFC5; the RFC complex interacts with PCNA. Forms an heterotetrameric complex with RFC2, RFC4 and RFC5; this complex has ATPase activity but is not stimulated by PCNA. The heterotetramer of subunits RFC2, RFC3, RFC4 and RFC5 interacts with RAD17. Interacts with CNTD1; this interaction facilitates crossover formation.

It localises to the nucleus. Its function is as follows. Subunit of the replication factor C (RFC) complex which acts during elongation of primed DNA templates by DNA polymerases delta and epsilon, and is necessary for ATP-dependent loading of proliferating cell nuclear antigen (PCNA) onto primed DNA. The polypeptide is Replication factor C subunit 3 (Rfc3) (Mus musculus (Mouse)).